A 431-amino-acid chain; its full sequence is Reverse prenyltransferase criA (431 aa).

Arg104, Lys193, Tyr195, Lys262, Tyr264, Tyr347, Tyr412, and Tyr416 together coordinate dimethylallyl diphosphate.

This sequence belongs to the tryptophan dimethylallyltransferase family. Monomer.

It carries out the reaction cyclo(L-tryptophyl-L-alanyl) + dimethylallyl diphosphate = preechinulin + diphosphate. It functions in the pathway secondary metabolite biosynthesis. It participates in alkaloid biosynthesis. In terms of biological role, reverse prenyltransferase; part of the gene cluster that mediates the biosynthesis of echinulin family alkaloid. The pathway begins with the biosynthesis of the cyclic dipeptide cyclo-L-Trp-L-Ala (cyclo-TA) by the NRPS criC via condensation of L-alanine and L-tryptophan. The prenyltransferase criA then catalyzes the first prenylation step, a reverse prenylation reaction at C2, to yield preechinulin. Preechinulin is the substrate of the cytochrome P450 monooxygenase criE that catalyzes the formation of the double bond between C10 and C11 to produce neoechulin A. The unique prenyltransferase criF functions as a competitive enzyme with criE for preechinulin metabolization and uses preechinulin for effective regiospecific prenylations. Preechinulin is prenylated by criF at C5 or C7. C7-prenylation leads to accumulation of tardioxopiperazine B without further modification by criF. In contrast, the C5-prenylated tardioxopiperazine A can be prenylated again by criF, predominantly at C7 to form echinulin or less frequently at C4 to give variecolorin L. CriF also accepts neoechilunin A to produce varlecolorin G (prenylation at C5) or isoechinulin A (prenylation at C7). CriF further converts isoechinulin A into dehydroechinulin. Moreover, a yet unidentified enzyme can also convert neoechilunin A into neoechilunin B by introducing a double bond between positions C14 and C17 and thus provides a further substrate to criF for C5 and C7 prenylation. This Aspergillus cristatus (Chinese Fuzhuan brick tea-fermentation fungus) protein is Reverse prenyltransferase criA.